A 1430-amino-acid polypeptide reads, in one-letter code: DNA-directed RNA polymerase subunit beta' (1430 aa).

Residues C70, C72, C85, and C88 each contribute to the Zn(2+) site. Residues D495, D497, and D499 each contribute to the Mg(2+) site. Residues C838, C912, C919, and C922 each coordinate Zn(2+).

The protein belongs to the RNA polymerase beta' chain family. In terms of assembly, the RNAP catalytic core consists of 2 alpha, 1 beta, 1 beta' and 1 omega subunit. When a sigma factor is associated with the core the holoenzyme is formed, which can initiate transcription. Mg(2+) is required as a cofactor. It depends on Zn(2+) as a cofactor.

The enzyme catalyses RNA(n) + a ribonucleoside 5'-triphosphate = RNA(n+1) + diphosphate. Functionally, DNA-dependent RNA polymerase catalyzes the transcription of DNA into RNA using the four ribonucleoside triphosphates as substrates. This Rhodospirillum centenum (strain ATCC 51521 / SW) protein is DNA-directed RNA polymerase subunit beta'.